Reading from the N-terminus, the 383-residue chain is Succinyl-diaminopimelate desuccinylase (383 aa).

Zn(2+) is bound at residue histidine 74. Aspartate 76 is a catalytic residue. Aspartate 107 lines the Zn(2+) pocket. The Proton acceptor role is filled by glutamate 141. Residues glutamate 142, glutamate 170, and histidine 356 each contribute to the Zn(2+) site.

This sequence belongs to the peptidase M20A family. DapE subfamily. Homodimer. It depends on Zn(2+) as a cofactor. Co(2+) serves as cofactor.

It carries out the reaction N-succinyl-(2S,6S)-2,6-diaminopimelate + H2O = (2S,6S)-2,6-diaminopimelate + succinate. The protein operates within amino-acid biosynthesis; L-lysine biosynthesis via DAP pathway; LL-2,6-diaminopimelate from (S)-tetrahydrodipicolinate (succinylase route): step 3/3. Its function is as follows. Catalyzes the hydrolysis of N-succinyl-L,L-diaminopimelic acid (SDAP), forming succinate and LL-2,6-diaminopimelate (DAP), an intermediate involved in the bacterial biosynthesis of lysine and meso-diaminopimelic acid, an essential component of bacterial cell walls. The protein is Succinyl-diaminopimelate desuccinylase of Polynucleobacter necessarius subsp. necessarius (strain STIR1).